Here is a 70-residue protein sequence, read N- to C-terminus: Large ribosomal subunit protein eL38 (70 aa).

It belongs to the eukaryotic ribosomal protein eL38 family.

The polypeptide is Large ribosomal subunit protein eL38 (rpl-38) (Caenorhabditis elegans).